The chain runs to 75 residues: MLKIRLKRIGRRGMPSYRVVVMRSQTRRDGKAIEDLGFYNPISKQCVINKERIKVRLSQGAQMTETVKYLYEVKA.

This sequence belongs to the bacterial ribosomal protein bS16 family.

The protein resides in the plastid. It is found in the chloroplast. The polypeptide is Small ribosomal subunit protein bS16c (Cyanidioschyzon merolae (strain NIES-3377 / 10D) (Unicellular red alga)).